Here is a 464-residue protein sequence, read N- to C-terminus: Splicing factor 3A subunit 2 (464 aa).

Methionine 1 is modified (N-acetylmethionine). The disordered stretch occupies residues 1-27 (MDFQHRPGGKTGSGGVASSSESNRDRR). Lysine 10 is subject to N6-acetyllysine. The segment at 54-84 (YECKLCLTLHNNEGSYLAHTQGKKHQTNLAR) adopts a Matrin-type zinc-finger fold. Serine 153 bears the Phosphoserine mark. Composition is skewed to pro residues over residues 217–295 (PPAP…PVVH), 303–323 (PPAPGVHPPAPGVHPPAPGVH), and 331–369 (PPAPGVHPPAPGVHPPAPGVHPPAPGVHPPAPGVHPPPS). The interval 217–464 (PPAPPSLPAG…GNIPPPPPTN (248 aa)) is disordered. Residues 370 to 392 (AGVHPQAPGVHPAAPAVHPQAPG) show a composition bias toward low complexity. A compositionally biased stretch (pro residues) spans 435–464 (VHPPTPMPPMLRPPLPSEGPGNIPPPPPTN).

This sequence belongs to the SF3A2 family. As to quaternary structure, component of the 17S U2 SnRNP complex, a ribonucleoprotein complex that contains small nuclear RNA (snRNA) U2 and a number of specific proteins. Part of the SF3A subcomplex of the 17S U2 SnRNP complex which is composed of three subunits; SF3A3/SAP61, SF3A2/SAP62 and SF3A1/SAP114. SF3A associates with the splicing factor SF3B and a 12S RNA unit to form the mature 17S U2 small nuclear ribonucleoprotein complex (17S U2 snRNP). Identified in the spliceosome 'E' complex, a precursor of the spliceosome 'A' complex. Identified in the spliceosome 'A' and 'B' complexes. Identified in the spliceosome 'C' complex. Interacts with HTATSF1.

It localises to the nucleus. Functionally, component of the 17S U2 SnRNP complex of the spliceosome, a large ribonucleoprotein complex that removes introns from transcribed pre-mRNAs. The 17S U2 SnRNP complex (1) directly participates in early spliceosome assembly and (2) mediates recognition of the intron branch site during pre-mRNA splicing by promoting the selection of the pre-mRNA branch-site adenosine, the nucleophile for the first step of splicing. Within the 17S U2 SnRNP complex, SF3A2 is part of the SF3A subcomplex that contributes to the assembly of the 17S U2 snRNP, and the subsequent assembly of the pre-spliceosome 'E' complex and the pre-catalytic spliceosome 'A' complex. Involved in pre-mRNA splicing as a component of pre-catalytic spliceosome 'B' complexes, including the Bact complex. Interacts directly with the duplex formed by U2 snRNA and the intron. This Homo sapiens (Human) protein is Splicing factor 3A subunit 2 (SF3A2).